Reading from the N-terminus, the 416-residue chain is MQALVLLLWTGALLGFGRCQNAGQEAGSLTPESTGAPVEEEDPFFKVPVNKLAAAVSNFGYDLYRVRSGESPTANVLLSPLSVATALSALSLGAEQRTESNIHRALYYDLISNPDIHGTYKDLLASVTAPQKNLKSASRIIFERKLRIKASFIPPLEKSYGTRPRILTGNSRVDLQEINNWVQAQMKGKVARSTREMPSEISIFLLGVAYFKGQWVTKFDSRKTSLEDFYLDEERTVKVPMMSDPQAVLRYGLDSDLNCKIAQLPLTGSTSIIFFLPQKVTQNLTLIEESLTSEFIHDIDRELKTVQAVLTIPKLKLSYEGELTKSVQELKLQSLFDAPDFSKITGKPIKLTQVEHRVGFEWNEDGAGTNSSPGVQPARLTFPLDYHLNQPFIFVLRDTDTGALLFIGKILDPRGT.

An N-terminal signal peptide occupies residues 1–20 (MQALVLLLWTGALLGFGRCQ). Serine 112 and serine 225 each carry phosphoserine. Asparagine 283 carries N-linked (GlcNAc...) asparagine glycosylation.

This sequence belongs to the serpin family. Interacts with PNPLA2; this interaction stimulates the phospholipase A2 activity of PNPLA2. In terms of tissue distribution, retinal pigment epithelial cells. Located in the interphotoreceptor matrix (IPM) which is between the retinal pigment epithelium and the neural retina.

Its subcellular location is the secreted. It is found in the melanosome. Functionally, neurotrophic protein; induces extensive neuronal differentiation in retinoblastoma cells. Potent inhibitor of angiogenesis. As it does not undergo the S (stressed) to R (relaxed) conformational transition characteristic of active serpins, it exhibits no serine protease inhibitory activity. The chain is Pigment epithelium-derived factor (SERPINF1) from Bos taurus (Bovine).